A 164-amino-acid chain; its full sequence is Phosphopantetheine adenylyltransferase (164 aa).

Residue serine 9 participates in substrate binding. Residues 9-10 and histidine 17 contribute to the ATP site; that span reads SF. Positions 41, 78, and 92 each coordinate substrate. Residues 93-95, glutamate 103, and 128-134 each bind ATP; these read GLR and SRPITAT.

The protein belongs to the bacterial CoaD family. In terms of assembly, homohexamer. It depends on Mg(2+) as a cofactor.

The protein resides in the cytoplasm. The enzyme catalyses (R)-4'-phosphopantetheine + ATP + H(+) = 3'-dephospho-CoA + diphosphate. It functions in the pathway cofactor biosynthesis; coenzyme A biosynthesis; CoA from (R)-pantothenate: step 4/5. In terms of biological role, reversibly transfers an adenylyl group from ATP to 4'-phosphopantetheine, yielding dephospho-CoA (dPCoA) and pyrophosphate. In Rhizobium etli (strain ATCC 51251 / DSM 11541 / JCM 21823 / NBRC 15573 / CFN 42), this protein is Phosphopantetheine adenylyltransferase.